The following is a 505-amino-acid chain: Deoxyguanosinetriphosphate triphosphohydrolase (505 aa).

In terms of domain architecture, HD spans 66-273; sequence RLTHSMEVQQ…MEAADDISYC (208 aa).

It belongs to the dGTPase family. Type 1 subfamily. As to quaternary structure, homotetramer. Requires Mg(2+) as cofactor.

The enzyme catalyses dGTP + H2O = 2'-deoxyguanosine + triphosphate + H(+). DGTPase preferentially hydrolyzes dGTP over the other canonical NTPs. The sequence is that of Deoxyguanosinetriphosphate triphosphohydrolase from Shigella boydii serotype 18 (strain CDC 3083-94 / BS512).